The sequence spans 657 residues: Transcription factor 12 (657 aa).

Residues 1-20 show a composition bias toward polar residues; the sequence is MDEKGGTTSWGTSGQPSPSY. Disordered stretches follow at residues 1–76, 89–285, 297–340, 459–555, and 628–657; these read MDEK…SGLS, LGSP…QTGD, PDHT…YENS, VSAQ…ERRM, and KVSAVSAEPPTPHPGSHPGLSETTNPMGHM. The span at 30 to 43 shows a compositional bias: basic and acidic residues; sequence HYSDHLNDSRKGTH. 2 stretches are compositionally biased toward polar residues: residues 49 to 70 and 93 to 112; these read TPFSNSNLIGKTSGRGSFSLYS and AQLSSSGKPETPYYSFSATS. The leucine-zipper stretch occupies residues 68–89; sequence LYSRDSGLSGCQSSLLRQELGL. A Nuclear localization signal motif is present at residues 130–136; the sequence is KKVRKVP. Composition is skewed to polar residues over residues 168–193, 202–216, and 230–254; these read MFASTFFMQDGTHSSSDLWSSSNGMS, GTSTSHMSQSGSYGS, and VSPTDINTSLPPMSSFHRGSTSSSP. The span at 300-311 shows a compositional bias: low complexity; that stretch reads TSSSFPSNPSTP. Residues 312–340 are compositionally biased toward polar residues; sequence VGSPSPLTGASQWSRSGGQAPSSPNYENS. 3 stretches are compositionally biased toward basic and acidic residues: residues 493-505, 511-526, and 543-555; these read IKSEHKEKDENIH, DDMKSDDESSQKDIKV, and PEQKIEREKERRM. The bHLH domain occupies 552–605; sequence ERRMANNARERLRVRDINEAFKELGRMCQLHLKSEKPQTKLLILHQAVAVILSL. Residues 607–630 form a class A specific domain region; sequence QQVRERNLNPKAACLKRREEEKVS. The segment covering 648 to 657 has biased composition (polar residues); it reads SETTNPMGHM.

Efficient DNA binding requires dimerization with another bHLH protein. Forms homo- or heterooligomers with myogenin, E12 and ITF2 proteins.

The protein resides in the nucleus. Functionally, transcriptional regulator. Involved in the initiation of neuronal differentiation. Activates transcription by binding to the E box-containing promoter. The polypeptide is Transcription factor 12 (TCF12) (Gallus gallus (Chicken)).